Consider the following 445-residue polypeptide: Phosphoglucosamine mutase (445 aa).

The active-site Phosphoserine intermediate is S102. S102, D241, D243, and D245 together coordinate Mg(2+). The residue at position 102 (S102) is a Phosphoserine.

It belongs to the phosphohexose mutase family. Requires Mg(2+) as cofactor. Post-translationally, activated by phosphorylation.

It catalyses the reaction alpha-D-glucosamine 1-phosphate = D-glucosamine 6-phosphate. Its function is as follows. Catalyzes the conversion of glucosamine-6-phosphate to glucosamine-1-phosphate. In Escherichia coli O81 (strain ED1a), this protein is Phosphoglucosamine mutase.